The following is a 75-amino-acid chain: Protein myomixer (75 aa).

Topologically, residues 1-5 are cytoplasmic; the sequence is MPAVF. A helical transmembrane segment spans residues 6–28; it reads LLLRSLVVRLFGSRLAASGVQLL. The Extracellular portion of the chain corresponds to 29–75; that stretch reads RRILTTATGHLGTVLRNIWERISSQQSKEAILGCVLCLLNMHKKVDN. The AxLyCxL motif lies at 58–67; sequence AILGCVLCLL.

Belongs to the MYMX family. As to expression, specifically expressed in the developing myotome.

The protein localises to the cell membrane. Its function is as follows. Myoblast-specific protein that mediates myoblast fusion, an essential step for the formation of multi-nucleated muscle fibers. Involved in membrane fusion downstream of the lipid mixing step mediated by mymk. Acts by generating membrane stresses via its extracellular C-terminus, leading to drive fusion pore formation. The chain is Protein myomixer from Danio rerio (Zebrafish).